A 439-amino-acid polypeptide reads, in one-letter code: Proline--tRNA ligase (439 aa).

Belongs to the class-II aminoacyl-tRNA synthetase family. ProS type 2 subfamily. As to quaternary structure, homodimer.

The protein resides in the cytoplasm. The catalysed reaction is tRNA(Pro) + L-proline + ATP = L-prolyl-tRNA(Pro) + AMP + diphosphate. Catalyzes the attachment of proline to tRNA(Pro) in a two-step reaction: proline is first activated by ATP to form Pro-AMP and then transferred to the acceptor end of tRNA(Pro). This Rhodopseudomonas palustris (strain BisA53) protein is Proline--tRNA ligase.